The chain runs to 328 residues: Glucokinase (328 aa).

16–21 contributes to the ATP binding site; it reads ADIGGT.

Belongs to the bacterial glucokinase family.

It localises to the cytoplasm. It carries out the reaction D-glucose + ATP = D-glucose 6-phosphate + ADP + H(+). This chain is Glucokinase, found in Neisseria gonorrhoeae (strain ATCC 700825 / FA 1090).